A 114-amino-acid polypeptide reads, in one-letter code: Large ribosomal subunit protein uL18 (114 aa).

Belongs to the universal ribosomal protein uL18 family. Part of the 50S ribosomal subunit; part of the 5S rRNA/L5/L18/L25 subcomplex. Contacts the 5S and 23S rRNAs.

In terms of biological role, this is one of the proteins that bind and probably mediate the attachment of the 5S RNA into the large ribosomal subunit, where it forms part of the central protuberance. In Aster yellows phytoplasma, this protein is Large ribosomal subunit protein uL18.